The sequence spans 53 residues: uncharacterized protein (53 aa).

The chain crosses the membrane as a helical span at residues 18–38 (FLFFIFYFLFFFIFFTVFGNL).

The protein localises to the membrane. This is an uncharacterized protein from Dictyostelium discoideum (Social amoeba).